A 292-amino-acid polypeptide reads, in one-letter code: Peroxisomal 2,4-dienoyl-CoA reductase SPS19 [(3E)-enoyl-CoA-producing] (292 aa).

Positions 36, 85, and 145 each coordinate NADP(+). The Proton donor role is filled by Ser162. Lys180 lines the NADP(+) pocket. The Lowers pKa of active site Tyr role is filled by Lys180. Lys188 participates in a covalent cross-link: Glycyl lysine isopeptide (Lys-Gly) (interchain with G-Cter in ubiquitin). Residue Ile209 participates in NADP(+) binding. A Microbody targeting signal motif is present at residues 290 to 292; that stretch reads SKL.

This sequence belongs to the short-chain dehydrogenases/reductases (SDR) family. As to quaternary structure, homodimer.

It localises to the peroxisome. It catalyses the reaction a (2E,4Z)-dienoyl-CoA + NADPH + H(+) = a 4,5-saturated-(3E)-enoyl-CoA + NADP(+). The enzyme catalyses a (2E,4E)-dienoyl-CoA + NADPH + H(+) = a 4,5-saturated-(3E)-enoyl-CoA + NADP(+). Functionally, auxiliary enzyme of beta-oxidation. Participates in the degradation of unsaturated fatty enoyl-CoA esters having double bonds in both even- and odd-numbered positions in peroxisome. Catalyzes the NADP-dependent reduction of 2,4-dienoyl-CoA to yield trans-3-enoyl-CoA. Dispensable for growth and sporulation on solid acetate and oleate media, but is essential for these processes to occur on petroselineate. This chain is Peroxisomal 2,4-dienoyl-CoA reductase SPS19 [(3E)-enoyl-CoA-producing] (SPS19), found in Saccharomyces cerevisiae (strain ATCC 204508 / S288c) (Baker's yeast).